A 310-amino-acid chain; its full sequence is Ribose-phosphate pyrophosphokinase (310 aa).

ATP-binding positions include 34–36 (DME) and 93–94 (RQ). Mg(2+)-binding residues include histidine 127 and aspartate 167. The active site involves lysine 190. D-ribose 5-phosphate contacts are provided by residues arginine 192, aspartate 216, and 220 to 224 (DSGGT).

Belongs to the ribose-phosphate pyrophosphokinase family. Class I subfamily. Homohexamer. Requires Mg(2+) as cofactor.

The protein localises to the cytoplasm. It catalyses the reaction D-ribose 5-phosphate + ATP = 5-phospho-alpha-D-ribose 1-diphosphate + AMP + H(+). The protein operates within metabolic intermediate biosynthesis; 5-phospho-alpha-D-ribose 1-diphosphate biosynthesis; 5-phospho-alpha-D-ribose 1-diphosphate from D-ribose 5-phosphate (route I): step 1/1. Its function is as follows. Involved in the biosynthesis of the central metabolite phospho-alpha-D-ribosyl-1-pyrophosphate (PRPP) via the transfer of pyrophosphoryl group from ATP to 1-hydroxyl of ribose-5-phosphate (Rib-5-P). The protein is Ribose-phosphate pyrophosphokinase of Granulibacter bethesdensis (strain ATCC BAA-1260 / CGDNIH1).